The chain runs to 392 residues: MTSNRMQTGHPADGVYFGLMSGTSMDGVDGVAVRFEAGKPPAVLSEAFVGFADTLRDALFALQQPGGDEIEREALAANALAARYAVCCHELLRTAGLLPDDVRALGVHGQTVRHRPERGYTRQLNNAALLAELTRIDVIADFRSRDVAAGGQGAPLVPAFHATVFGSPDETRVVCNLGGISNITILPAGGGPQGEGHARNDTVRGHDCGPANALIDAWVERHLKQPFDDGGRFAARGKVDETLLAALLDEPYFRQNAPKSTGRDLFNADWLDAKLAGFQHLAPENVQATLTALTAATVADEIARHAGDCRAVYVCGGGARNPVLLDALATALAARGLDAAVATTAALGVPPQQVESLAFAWLAYRFNARAPGNVSTVTGAAGERVLGALYPR.

22-29 (GTSMDGVD) serves as a coordination point for ATP.

The protein belongs to the anhydro-N-acetylmuramic acid kinase family.

The enzyme catalyses 1,6-anhydro-N-acetyl-beta-muramate + ATP + H2O = N-acetyl-D-muramate 6-phosphate + ADP + H(+). It participates in amino-sugar metabolism; 1,6-anhydro-N-acetylmuramate degradation. It functions in the pathway cell wall biogenesis; peptidoglycan recycling. In terms of biological role, catalyzes the specific phosphorylation of 1,6-anhydro-N-acetylmuramic acid (anhMurNAc) with the simultaneous cleavage of the 1,6-anhydro ring, generating MurNAc-6-P. Is required for the utilization of anhMurNAc either imported from the medium or derived from its own cell wall murein, and thus plays a role in cell wall recycling. The polypeptide is Anhydro-N-acetylmuramic acid kinase (Burkholderia mallei (strain NCTC 10229)).